The following is a 476-amino-acid chain: Aspartyl/glutamyl-tRNA(Asn/Gln) amidotransferase subunit B (476 aa).

Belongs to the GatB/GatE family. GatB subfamily. In terms of assembly, heterotrimer of A, B and C subunits.

It catalyses the reaction L-glutamyl-tRNA(Gln) + L-glutamine + ATP + H2O = L-glutaminyl-tRNA(Gln) + L-glutamate + ADP + phosphate + H(+). It carries out the reaction L-aspartyl-tRNA(Asn) + L-glutamine + ATP + H2O = L-asparaginyl-tRNA(Asn) + L-glutamate + ADP + phosphate + 2 H(+). Functionally, allows the formation of correctly charged Asn-tRNA(Asn) or Gln-tRNA(Gln) through the transamidation of misacylated Asp-tRNA(Asn) or Glu-tRNA(Gln) in organisms which lack either or both of asparaginyl-tRNA or glutaminyl-tRNA synthetases. The reaction takes place in the presence of glutamine and ATP through an activated phospho-Asp-tRNA(Asn) or phospho-Glu-tRNA(Gln). The chain is Aspartyl/glutamyl-tRNA(Asn/Gln) amidotransferase subunit B from Lactobacillus helveticus (strain DPC 4571).